A 114-amino-acid chain; its full sequence is Flagellar hook-basal body complex protein FliE (114 aa).

It belongs to the FliE family.

It localises to the bacterial flagellum basal body. This is Flagellar hook-basal body complex protein FliE from Burkholderia cenocepacia (strain ATCC BAA-245 / DSM 16553 / LMG 16656 / NCTC 13227 / J2315 / CF5610) (Burkholderia cepacia (strain J2315)).